The following is a 108-amino-acid chain: Glutaredoxin-1 (108 aa).

Residues 3 to 106 (EEFVQQRLAN…DILSSIGVLR (104 aa)) form the Glutaredoxin domain. C23 and C26 are joined by a disulfide.

It belongs to the glutaredoxin family.

The protein resides in the virion. Functionally, has thioltransferase and dehydroascorbate reductase activities. The protein is Glutaredoxin-1 (OPG075) of Cowpox virus (strain GRI-90 / Grishak) (CPV).